Reading from the N-terminus, the 413-residue chain is Palmitoyltransferase ZDHHC6 (413 aa).

Residues methionine 1–proline 24 lie on the Cytoplasmic side of the membrane. A helical transmembrane segment spans residues isoleucine 25–tryptophan 45. The Lumenal portion of the chain corresponds to tyrosine 46–asparagine 57. A helical transmembrane segment spans residues phenylalanine 58–valine 78. Over glycine 79–serine 143 the chain is Cytoplasmic. One can recognise a DHHC domain in the interval glutamine 99–leucine 149. Cysteine 129 acts as the S-palmitoyl cysteine intermediate in catalysis. A helical transmembrane segment spans residues phenylalanine 144–methionine 164. The Lumenal segment spans residues threonine 165–proline 194. A helical transmembrane segment spans residues isoleucine 195–glycine 215. The Cytoplasmic segment spans residues threonine 216 to arginine 413. The 86-residue stretch at valine 313–cysteine 398 folds into the SH3 domain. 3 S-palmitoyl cysteine lipidation sites follow: cysteine 328, cysteine 329, and cysteine 343. A Di-lysine motif motif is present at residues lysine 410–arginine 413.

Belongs to the DHHC palmitoyltransferase family. Homooligomerizes. Interacts with SELENOK. Post-translationally, palmitoylated at 3 different sites by ZDHHC16. The combination of the different palmitoylation events strongly affects the quaternary assembly of ZDHHC6, its localization, stability and function. Palmitoylation at Cys-328 accelerates the turnover of ZDHHC6. Depalmitoylated by LYPLA2.

The protein resides in the endoplasmic reticulum membrane. It carries out the reaction L-cysteinyl-[protein] + hexadecanoyl-CoA = S-hexadecanoyl-L-cysteinyl-[protein] + CoA. The enzyme catalyses L-cysteinyl-[protein] + octadecanoyl-CoA = S-octadecanoyl-L-cysteinyl-[protein] + CoA. Functionally, endoplasmic reticulum palmitoyl acyltransferase that mediates palmitoylation of proteins such as AMFR, CALX, ITPR1 and TFRC. Palmitoylates calnexin (CALX), which is required for its association with the ribosome-translocon complex and efficient folding of glycosylated proteins. Mediates palmitoylation of AMFR, promoting AMFR distribution to the peripheral endoplasmic reticulum. Together with SELENOK, palmitoylates ITPR1 in immune cells, leading to regulate ITPR1 stability and function. Stearoyltransferase that mediates stearoylation of TFRC to inhibit TFRC-mediated activation of the JNK pathway and mitochondrial fragmentation. This chain is Palmitoyltransferase ZDHHC6, found in Bos taurus (Bovine).